Reading from the N-terminus, the 152-residue chain is Endoribonuclease YbeY (152 aa).

Residues His-101, His-105, and His-111 each coordinate Zn(2+). The tract at residues 132–152 (PSSLIERTTKPAKKAAKRKKR) is disordered. Residues 141–152 (KPAKKAAKRKKR) are compositionally biased toward basic residues.

It belongs to the endoribonuclease YbeY family. It depends on Zn(2+) as a cofactor.

The protein localises to the cytoplasm. Single strand-specific metallo-endoribonuclease involved in late-stage 70S ribosome quality control and in maturation of the 3' terminus of the 16S rRNA. The sequence is that of Endoribonuclease YbeY from Koribacter versatilis (strain Ellin345).